The sequence spans 307 residues: tRNA dimethylallyltransferase (307 aa).

8–15 (GPTGSGKS) lines the ATP pocket. 10–15 (TGSGKS) is a binding site for substrate. The tract at residues 33-36 (DSLQ) is interaction with substrate tRNA.

Belongs to the IPP transferase family. In terms of assembly, monomer. Requires Mg(2+) as cofactor.

It catalyses the reaction adenosine(37) in tRNA + dimethylallyl diphosphate = N(6)-dimethylallyladenosine(37) in tRNA + diphosphate. Catalyzes the transfer of a dimethylallyl group onto the adenine at position 37 in tRNAs that read codons beginning with uridine, leading to the formation of N6-(dimethylallyl)adenosine (i(6)A). This chain is tRNA dimethylallyltransferase, found in Solibacter usitatus (strain Ellin6076).